Reading from the N-terminus, the 476-residue chain is Sulfate adenylyltransferase subunit 1 (476 aa).

The tr-type G domain maps to 24-239 (KSLLRFLTCG…LLETVDVDYE (216 aa)). A G1 region spans residues 33 to 40 (GSVDDGKS). Residue 33-40 (GSVDDGKS) coordinates GTP. Positions 91–95 (GITID) are G2. The tract at residues 112–115 (DTPG) is G3. GTP-binding positions include 112 to 116 (DTPGH) and 167 to 170 (NKMD). The segment at 167–170 (NKMD) is G4. The segment at 205-207 (SAL) is G5.

It belongs to the TRAFAC class translation factor GTPase superfamily. Classic translation factor GTPase family. CysN/NodQ subfamily. As to quaternary structure, heterodimer composed of CysD, the smaller subunit, and CysN.

The enzyme catalyses sulfate + ATP + H(+) = adenosine 5'-phosphosulfate + diphosphate. Its pathway is sulfur metabolism; hydrogen sulfide biosynthesis; sulfite from sulfate: step 1/3. With CysD forms the ATP sulfurylase (ATPS) that catalyzes the adenylation of sulfate producing adenosine 5'-phosphosulfate (APS) and diphosphate, the first enzymatic step in sulfur assimilation pathway. APS synthesis involves the formation of a high-energy phosphoric-sulfuric acid anhydride bond driven by GTP hydrolysis by CysN coupled to ATP hydrolysis by CysD. The sequence is that of Sulfate adenylyltransferase subunit 1 from Vibrio parahaemolyticus serotype O3:K6 (strain RIMD 2210633).